The following is a 159-amino-acid chain: Phosphopantetheine adenylyltransferase (159 aa).

Substrate is bound at residue Thr-10. ATP-binding positions include 10–11 (TF) and His-18. Substrate-binding residues include Lys-42, Met-74, and Arg-88. ATP contacts are provided by residues 89–91 (GLR), Glu-99, and 124–130 (WSFISSS).

Belongs to the bacterial CoaD family. In terms of assembly, homohexamer. It depends on Mg(2+) as a cofactor.

The protein resides in the cytoplasm. It catalyses the reaction (R)-4'-phosphopantetheine + ATP + H(+) = 3'-dephospho-CoA + diphosphate. It participates in cofactor biosynthesis; coenzyme A biosynthesis; CoA from (R)-pantothenate: step 4/5. Reversibly transfers an adenylyl group from ATP to 4'-phosphopantetheine, yielding dephospho-CoA (dPCoA) and pyrophosphate. The chain is Phosphopantetheine adenylyltransferase from Citrobacter koseri (strain ATCC BAA-895 / CDC 4225-83 / SGSC4696).